The chain runs to 831 residues: Periplasmic nitrate reductase (831 aa).

Residues 1–29 constitute a signal peptide (tat-type signal); the sequence is MKISRRDFIKQTAITATASVAGVTLPAGA. The 57-residue stretch at 41-97 folds into the 4Fe-4S Mo/W bis-MGD-type domain; it reads LKWSKAPCRFCGTGCGVTVAVKDNKVVATQGDPQAEVNKGLNCVKGYFLSKIMYGQD. [4Fe-4S] cluster contacts are provided by cysteine 48, cysteine 51, cysteine 55, and cysteine 83. Mo-bis(molybdopterin guanine dinucleotide) contacts are provided by residues lysine 85, glutamine 152, asparagine 177, cysteine 181, 214 to 221, 245 to 249, 264 to 266, methionine 375, glutamine 379, asparagine 485, 511 to 512, lysine 534, aspartate 561, and 721 to 730; these read WGSNMAEM, STFTH, QTD, SD, and TGRVLEHWHS. Tryptophan 797 contributes to the substrate binding site. Residues asparagine 805 and lysine 822 each contribute to the Mo-bis(molybdopterin guanine dinucleotide) site.

This sequence belongs to the prokaryotic molybdopterin-containing oxidoreductase family. NasA/NapA/NarB subfamily. As to quaternary structure, component of the periplasmic nitrate reductase NapAB complex composed of NapA and NapB. [4Fe-4S] cluster is required as a cofactor. It depends on Mo-bis(molybdopterin guanine dinucleotide) as a cofactor. Post-translationally, predicted to be exported by the Tat system. The position of the signal peptide cleavage has been experimentally proven.

It is found in the periplasm. The enzyme catalyses 2 Fe(II)-[cytochrome] + nitrate + 2 H(+) = 2 Fe(III)-[cytochrome] + nitrite + H2O. In terms of biological role, catalytic subunit of the periplasmic nitrate reductase complex NapAB. Receives electrons from NapB and catalyzes the reduction of nitrate to nitrite. The sequence is that of Periplasmic nitrate reductase from Cupriavidus necator (strain ATCC 17699 / DSM 428 / KCTC 22496 / NCIMB 10442 / H16 / Stanier 337) (Ralstonia eutropha).